Here is a 165-residue protein sequence, read N- to C-terminus: Type 3 secretion system regulator YopR (165 aa).

Belongs to the YopR family.

It is found in the secreted. In terms of biological role, may be involved in the regulation of the assembly of the type III secretion system (T3SS), also called injectisome, which is used to inject bacterial effector proteins into eukaryotic host cells. May control the secretion and/or polymerization of YscF/SctF, the principal component of the needle filament, thereby impacting the assembly of the T3SS. Involved in pathogenesis. The chain is Type 3 secretion system regulator YopR from Yersinia pestis.